The chain runs to 402 residues: tRNA(Met) cytidine acetate ligase (402 aa).

ATP contacts are provided by residues 7-20 (IAEY…HIHH), glycine 102, asparagine 171, and arginine 196.

The protein belongs to the TmcAL family.

The protein resides in the cytoplasm. It carries out the reaction cytidine(34) in elongator tRNA(Met) + acetate + ATP = N(4)-acetylcytidine(34) in elongator tRNA(Met) + AMP + diphosphate. In terms of biological role, catalyzes the formation of N(4)-acetylcytidine (ac(4)C) at the wobble position of elongator tRNA(Met), using acetate and ATP as substrates. First activates an acetate ion to form acetyladenylate (Ac-AMP) and then transfers the acetyl group to tRNA to form ac(4)C34. This is tRNA(Met) cytidine acetate ligase from Clostridium acetobutylicum (strain ATCC 824 / DSM 792 / JCM 1419 / IAM 19013 / LMG 5710 / NBRC 13948 / NRRL B-527 / VKM B-1787 / 2291 / W).